A 212-amino-acid chain; its full sequence is Probable nicotinate-nucleotide adenylyltransferase (212 aa).

The protein belongs to the NadD family.

The enzyme catalyses nicotinate beta-D-ribonucleotide + ATP + H(+) = deamido-NAD(+) + diphosphate. The protein operates within cofactor biosynthesis; NAD(+) biosynthesis; deamido-NAD(+) from nicotinate D-ribonucleotide: step 1/1. Its function is as follows. Catalyzes the reversible adenylation of nicotinate mononucleotide (NaMN) to nicotinic acid adenine dinucleotide (NaAD). This chain is Probable nicotinate-nucleotide adenylyltransferase, found in Shewanella sp. (strain MR-4).